A 59-amino-acid polypeptide reads, in one-letter code: Alpha-conotoxin CIA (59 aa).

Residues 1–16 (MFTVFLLVVLTITVVS) form the signal peptide. Positions 17-42 (FPSDRASDGRDDEAKDERSDMYKSKR) are excised as a propeptide. 2 cysteine pairs are disulfide-bonded: Cys46–Cys51 and Cys47–Cys57. Position 57 is a cysteine amide (Cys57).

Belongs to the conotoxin A superfamily. In terms of tissue distribution, expressed by the venom duct.

It localises to the secreted. Alpha-conotoxins act on postsynaptic membranes, they bind to the nicotinic acetylcholine receptors (nAChR) and thus inhibit them. This toxin blocks the rat muscle nAChRs alpha-1-beta-1-gamma-delta (CHRNA1-CHRNB1-CHRNG-CHRND) (IC(50)=5.7 nM) and the rat neuronal nAChR alpha-3-beta-2/CHRNA3-CHRNB2 (IC(50)=2060 nM). In vivo, intramuscular injection into zebrafish produces rapid flaccid paralysis. This is Alpha-conotoxin CIA from Conus catus (Cat cone).